The primary structure comprises 347 residues: uncharacterized protein (347 aa).

An N-terminal signal peptide occupies residues 1–26; sequence MQGRVAGSCAPLGLLLVCLHLPGLFA. Residues 41–60 show a composition bias toward polar residues; that stretch reads GTNLPQLGQPSSTGPSNSEH. 2 disordered regions span residues 41–110 and 148–189; these read GTNL…MDSW and SGPL…AGGK. Low complexity predominate over residues 148–157; it reads SGPLPGESSP.

As to quaternary structure, binds to numerous extracellular matrix proteins.

It localises to the secreted. Its subcellular location is the extracellular space. The protein resides in the extracellular matrix. This is an uncharacterized protein from Pan troglodytes (Chimpanzee).